Consider the following 262-residue polypeptide: Glycine and serine-rich protein 1 (262 aa).

Positions 1-21 (MVIKTSLTVLILGVLIAEVFC) are cleaved as a signal peptide. Residue Asn-59 is glycosylated (N-linked (GlcNAc...) asparagine). Residues 172–212 (SNGGWGAETGSSGGMNSQSSGSQSGSWGSSSGSWGGSSGSM) form a disordered region. Over residues 174 to 184 (GGWGAETGSSG) the composition is skewed to gly residues. Residues 185-203 (GMNSQSSGSQSGSWGSSSG) show a composition bias toward low complexity.

Component of the acid-insoluble and acid-soluble organic matrix of calcified layers of the shell (at protein level).

The protein localises to the secreted. This is Glycine and serine-rich protein 1 from Lottia gigantea (Giant owl limpet).